A 476-amino-acid chain; its full sequence is Phosphomethylpyrimidine synthase (476 aa).

Residues 1–27 form a disordered region; the sequence is MSTQLQHARDGTVTDAMRRVADREGRD. A compositionally biased stretch (basic and acidic residues) spans 7–27; sequence HARDGTVTDAMRRVADREGRD. Substrate-binding positions include Asn-67, Met-96, Tyr-125, His-160, 180–182, 221–224, and Glu-260; these read SRG and DGLR. Position 264 (His-264) interacts with Zn(2+). Residue Tyr-287 coordinates substrate. His-328 provides a ligand contact to Zn(2+). 3 residues coordinate [4Fe-4S] cluster: Cys-408, Cys-411, and Cys-416. A disordered region spans residues 425–476; the sequence is RDAGDDADDMTELTTETDLSESAAAEVNRPPTGTHDAPAAEQAPSPGDDDDD. Residues 436–447 show a composition bias toward low complexity; that stretch reads ELTTETDLSESA.

It belongs to the ThiC family. [4Fe-4S] cluster is required as a cofactor.

The enzyme catalyses 5-amino-1-(5-phospho-beta-D-ribosyl)imidazole + S-adenosyl-L-methionine = 4-amino-2-methyl-5-(phosphooxymethyl)pyrimidine + CO + 5'-deoxyadenosine + formate + L-methionine + 3 H(+). The protein operates within cofactor biosynthesis; thiamine diphosphate biosynthesis. Its function is as follows. Catalyzes the synthesis of the hydroxymethylpyrimidine phosphate (HMP-P) moiety of thiamine from aminoimidazole ribotide (AIR) in a radical S-adenosyl-L-methionine (SAM)-dependent reaction. The protein is Phosphomethylpyrimidine synthase of Halobacterium salinarum (strain ATCC 29341 / DSM 671 / R1).